Consider the following 218-residue polypeptide: Deoxyribose-phosphate aldolase (218 aa).

The active-site Proton donor/acceptor is the aspartate 89. The Schiff-base intermediate with acetaldehyde role is filled by lysine 152. Lysine 182 serves as the catalytic Proton donor/acceptor.

It belongs to the DeoC/FbaB aldolase family. DeoC type 1 subfamily.

Its subcellular location is the cytoplasm. It catalyses the reaction 2-deoxy-D-ribose 5-phosphate = D-glyceraldehyde 3-phosphate + acetaldehyde. It functions in the pathway carbohydrate degradation; 2-deoxy-D-ribose 1-phosphate degradation; D-glyceraldehyde 3-phosphate and acetaldehyde from 2-deoxy-alpha-D-ribose 1-phosphate: step 2/2. Catalyzes a reversible aldol reaction between acetaldehyde and D-glyceraldehyde 3-phosphate to generate 2-deoxy-D-ribose 5-phosphate. This Kocuria rhizophila (strain ATCC 9341 / DSM 348 / NBRC 103217 / DC2201) protein is Deoxyribose-phosphate aldolase.